The following is a 93-amino-acid chain: Co-chaperonin GroES (93 aa).

It belongs to the GroES chaperonin family. As to quaternary structure, heptamer of 7 subunits arranged in a ring. Interacts with the chaperonin GroEL.

It is found in the cytoplasm. Functionally, together with the chaperonin GroEL, plays an essential role in assisting protein folding. The GroEL-GroES system forms a nano-cage that allows encapsulation of the non-native substrate proteins and provides a physical environment optimized to promote and accelerate protein folding. GroES binds to the apical surface of the GroEL ring, thereby capping the opening of the GroEL channel. The protein is Co-chaperonin GroES of Streptococcus anginosus.